We begin with the raw amino-acid sequence, 316 residues long: MAAPGEIILEDVPASVNLFRTLQDQVTKVTAHVQALTQKVRSGIYNTDKGLSFLELKDQLLLFYLQDLTHLMLEKTNGKSIKGNPGILRLVELRTVLEKMRPIDQKLKYQIDKLVRASVTGSLGENDPLRFKPNPQNLISKLSEADEGESDSGEDCAESGNAKKPQSKVKKYIPPRLAPVHYDDTEAEREHRIIERAKKLALSSSTIRELKEQYSDAPEEIREGRAYHMMRHDKEEQHRINHEESMMVRLNMTRKEKARKKRVLAMTSQLNSLTHFSDISALTGGEGRTDDLVPSVKKSRKGPKKSKKRKGFRKRH.

2 disordered regions span residues 143–172 and 280–316; these read SEAD…VKKY and SALT…RKRH. A compositionally biased stretch (acidic residues) spans 145 to 157; sequence ADEGESDSGEDCA. Residues 297 to 316 are compositionally biased toward basic residues; sequence KKSRKGPKKSKKRKGFRKRH.

The protein belongs to the SAS10 family. In terms of assembly, part of the small subunit (SSU) processome, composed of more than 70 proteins and the RNA chaperone small nucleolar RNA (snoRNA) U3.

The protein localises to the nucleus. The protein resides in the nucleolus. It is found in the chromosome. Its subcellular location is the centromere. It localises to the cytoplasm. The protein localises to the cell projection. The protein resides in the axon. It is found in the dendrite. Its subcellular location is the filopodium. Part of the small subunit (SSU) processome, first precursor of the small eukaryotic ribosomal subunit. During the assembly of the SSU processome in the nucleolus, many ribosome biogenesis factors, an RNA chaperone and ribosomal proteins associate with the nascent pre-rRNA and work in concert to generate RNA folding, modifications, rearrangements and cleavage as well as targeted degradation of pre-ribosomal RNA by the RNA exosome. Its dissociation from the complex determines the transition from state pre-A1 to state pre-A1*. May inhibit mRNA translation. The chain is Neuroguidin (ngdn) from Xenopus tropicalis (Western clawed frog).